The following is a 269-amino-acid chain: Membrane protein insertase YidC 1 (269 aa).

A signal peptide spans methionine 1–alanine 20. Cysteine 21 carries N-palmitoyl cysteine lipidation. Cysteine 21 carries S-diacylglycerol cysteine lipidation. The next 4 helical transmembrane spans lie at isoleucine 45–isoleucine 65, tyrosine 124–leucine 144, proline 165–methionine 185, and proline 203–isoleucine 223.

It belongs to the OXA1/ALB3/YidC family. Type 2 subfamily.

The protein resides in the cell membrane. Its function is as follows. Required for the insertion and/or proper folding and/or complex formation of integral membrane proteins into the membrane. Involved in integration of membrane proteins that insert both dependently and independently of the Sec translocase complex, as well as at least some lipoproteins. This Lactococcus lactis subsp. lactis (strain IL1403) (Streptococcus lactis) protein is Membrane protein insertase YidC 1.